The sequence spans 298 residues: Protein FAM221A (298 aa).

A compositionally biased stretch (polar residues) spans 241–257 (SSPETLTDVGTSSQVSS). Positions 241–263 (SSPETLTDVGTSSQVSSLRRPEE) are disordered.

The protein belongs to the FAM221 family.

This chain is Protein FAM221A (FAM221A), found in Homo sapiens (Human).